The chain runs to 155 residues: Small ribosomal subunit protein uS7 (155 aa).

Belongs to the universal ribosomal protein uS7 family. As to quaternary structure, part of the 30S ribosomal subunit. Contacts proteins S9 and S11.

Functionally, one of the primary rRNA binding proteins, it binds directly to 16S rRNA where it nucleates assembly of the head domain of the 30S subunit. Is located at the subunit interface close to the decoding center, probably blocks exit of the E-site tRNA. The polypeptide is Small ribosomal subunit protein uS7 (Ureaplasma parvum serovar 3 (strain ATCC 27815 / 27 / NCTC 11736)).